We begin with the raw amino-acid sequence, 492 residues long: MO25-like protein 3 (492 aa).

Residues 442–492 (SRAGIRFGETRNVKGSPRSRSQSPRPPTGPEPSPRTTSYQNVRFPPEDSSR) are disordered. Residues 465–474 (PRPPTGPEPS) show a composition bias toward pro residues.

The protein belongs to the Mo25 family.

The sequence is that of MO25-like protein 3 from Caenorhabditis briggsae.